A 133-amino-acid chain; its full sequence is Ribonuclease P protein component (133 aa).

Belongs to the RnpA family. In terms of assembly, consists of a catalytic RNA component (M1 or rnpB) and a protein subunit.

It carries out the reaction Endonucleolytic cleavage of RNA, removing 5'-extranucleotides from tRNA precursor.. Its function is as follows. RNaseP catalyzes the removal of the 5'-leader sequence from pre-tRNA to produce the mature 5'-terminus. It can also cleave other RNA substrates such as 4.5S RNA. The protein component plays an auxiliary but essential role in vivo by binding to the 5'-leader sequence and broadening the substrate specificity of the ribozyme. The sequence is that of Ribonuclease P protein component from Pseudomonas fluorescens (strain Pf0-1).